A 144-amino-acid chain; its full sequence is Large ribosomal subunit protein uL13 (144 aa).

This sequence belongs to the universal ribosomal protein uL13 family. In terms of assembly, part of the 50S ribosomal subunit.

Its function is as follows. This protein is one of the early assembly proteins of the 50S ribosomal subunit, although it is not seen to bind rRNA by itself. It is important during the early stages of 50S assembly. In Lawsonia intracellularis (strain PHE/MN1-00), this protein is Large ribosomal subunit protein uL13.